Reading from the N-terminus, the 77-residue chain is uncharacterized protein (77 aa).

This is an uncharacterized protein from Acidianus hospitalis (AFV-1).